The following is a 400-amino-acid chain: 3-hydroxybenzoate 6-hydroxylase (400 aa).

The protein belongs to the 3-hydroxybenzoate 6-hydroxylase family. As to quaternary structure, monomer. FAD serves as cofactor.

The catalysed reaction is 3-hydroxybenzoate + NADH + O2 + H(+) = 2,5-dihydroxybenzoate + NAD(+) + H2O. In terms of biological role, catalyzes the NAD- or NADP-dependent conversion of 3-hydroxybenzoate to gentisate. The affinity of the enzyme toward NAD is twice as high as for NADP. The chain is 3-hydroxybenzoate 6-hydroxylase (nagX) from Polaromonas naphthalenivorans (strain CJ2).